The primary structure comprises 232 residues: Large ribosomal subunit protein uL1 (232 aa).

This sequence belongs to the universal ribosomal protein uL1 family. As to quaternary structure, part of the 50S ribosomal subunit.

Binds directly to 23S rRNA. The L1 stalk is quite mobile in the ribosome, and is involved in E site tRNA release. In terms of biological role, protein L1 is also a translational repressor protein, it controls the translation of the L11 operon by binding to its mRNA. This chain is Large ribosomal subunit protein uL1, found in Burkholderia vietnamiensis (strain G4 / LMG 22486) (Burkholderia cepacia (strain R1808)).